The following is a 473-amino-acid chain: Transposase for insertion sequence element IS1151 (473 aa).

This sequence belongs to the transposase 11 family.

Involved in the transposition of the insertion sequence. This is Transposase for insertion sequence element IS1151 (tnp) from Clostridium perfringens.